The primary structure comprises 283 residues: 4-diphosphocytidyl-2-C-methyl-D-erythritol kinase (283 aa).

The active site involves Lys9. Residue 93-103 coordinates ATP; sequence PIAAGLAGGSS. Asp135 is an active-site residue.

This sequence belongs to the GHMP kinase family. IspE subfamily.

The enzyme catalyses 4-CDP-2-C-methyl-D-erythritol + ATP = 4-CDP-2-C-methyl-D-erythritol 2-phosphate + ADP + H(+). It participates in isoprenoid biosynthesis; isopentenyl diphosphate biosynthesis via DXP pathway; isopentenyl diphosphate from 1-deoxy-D-xylulose 5-phosphate: step 3/6. Catalyzes the phosphorylation of the position 2 hydroxy group of 4-diphosphocytidyl-2C-methyl-D-erythritol. The polypeptide is 4-diphosphocytidyl-2-C-methyl-D-erythritol kinase (Macrococcus caseolyticus (strain JCSC5402) (Macrococcoides caseolyticum)).